Consider the following 526-residue polypeptide: Peptide chain release factor 3 (526 aa).

In terms of domain architecture, tr-type G spans 8–277; it reads NKRRTFAIIS…GLTEWAPKPQ (270 aa). Residues 17–24, 85–89, and 139–142 contribute to the GTP site; these read SHPDAGKT, DTPGH, and NKLD.

It belongs to the TRAFAC class translation factor GTPase superfamily. Classic translation factor GTPase family. PrfC subfamily.

It is found in the cytoplasm. Functionally, increases the formation of ribosomal termination complexes and stimulates activities of RF-1 and RF-2. It binds guanine nucleotides and has strong preference for UGA stop codons. It may interact directly with the ribosome. The stimulation of RF-1 and RF-2 is significantly reduced by GTP and GDP, but not by GMP. The sequence is that of Peptide chain release factor 3 from Actinobacillus pleuropneumoniae serotype 3 (strain JL03).